The primary structure comprises 177 residues: Inorganic pyrophosphatase (177 aa).

Positions 29, 43, and 55 each coordinate substrate. Mg(2+) is bound by residues Asp65, Asp70, and Asp102. Tyr141 is a substrate binding site.

Belongs to the PPase family. In terms of assembly, homohexamer. Mg(2+) is required as a cofactor.

It is found in the cytoplasm. It carries out the reaction diphosphate + H2O = 2 phosphate + H(+). Catalyzes the hydrolysis of inorganic pyrophosphate (PPi) forming two phosphate ions. This Aquifex pyrophilus protein is Inorganic pyrophosphatase.